A 98-amino-acid chain; its full sequence is Large ribosomal subunit protein bL27 (98 aa).

The propeptide occupies 1–10; the sequence is MELKMNLQLF. Residues 11-30 form a disordered region; sequence AQKKGTGSSKNGRDSISKRL.

The protein belongs to the bacterial ribosomal protein bL27 family. Post-translationally, the N-terminus is cleaved by ribosomal processing cysteine protease Prp.

The chain is Large ribosomal subunit protein bL27 from Natranaerobius thermophilus (strain ATCC BAA-1301 / DSM 18059 / JW/NM-WN-LF).